The sequence spans 170 residues: Crossover junction endodeoxyribonuclease RuvC (170 aa).

Residues Asp-11, Glu-71, and Asp-143 contribute to the active site. Residues Asp-11, Glu-71, and Asp-143 each contribute to the Mg(2+) site.

This sequence belongs to the RuvC family. Homodimer which binds Holliday junction (HJ) DNA. The HJ becomes 2-fold symmetrical on binding to RuvC with unstacked arms; it has a different conformation from HJ DNA in complex with RuvA. In the full resolvosome a probable DNA-RuvA(4)-RuvB(12)-RuvC(2) complex forms which resolves the HJ. Requires Mg(2+) as cofactor.

Its subcellular location is the cytoplasm. The enzyme catalyses Endonucleolytic cleavage at a junction such as a reciprocal single-stranded crossover between two homologous DNA duplexes (Holliday junction).. Its function is as follows. The RuvA-RuvB-RuvC complex processes Holliday junction (HJ) DNA during genetic recombination and DNA repair. Endonuclease that resolves HJ intermediates. Cleaves cruciform DNA by making single-stranded nicks across the HJ at symmetrical positions within the homologous arms, yielding a 5'-phosphate and a 3'-hydroxyl group; requires a central core of homology in the junction. The consensus cleavage sequence is 5'-(A/T)TT(C/G)-3'. Cleavage occurs on the 3'-side of the TT dinucleotide at the point of strand exchange. HJ branch migration catalyzed by RuvA-RuvB allows RuvC to scan DNA until it finds its consensus sequence, where it cleaves and resolves the cruciform DNA. This chain is Crossover junction endodeoxyribonuclease RuvC, found in Agrobacterium fabrum (strain C58 / ATCC 33970) (Agrobacterium tumefaciens (strain C58)).